We begin with the raw amino-acid sequence, 264 residues long: Nuclear egress protein 1 (264 aa).

Over residues 1–12 (MTVHKNRFRRSR) the composition is skewed to basic residues. The tract at residues 1-22 (MTVHKNRFRRSRSLSVTHRIQK) is disordered. The CCCH-type zinc finger occupies 83–187 (CLEFSPYANE…HIVFQSRTLH (105 aa)).

This sequence belongs to the herpesviridae NEC1 protein family. As to quaternary structure, forms a heterohexameric complex with NEC2. Interacts with capsid vertex specific component 2/CVC2; this interaction directs the capsid to the host inner nuclear membrane to initiate budding. Post-translationally, phosphorylated at serine residues in the N-terminus. This phosphorylation regulates the localization within the inner nuclear membrane.

The protein resides in the host nucleus inner membrane. Functionally, plays an essential role in virion nuclear egress, the first step of virion release from infected cell. Within the host nucleus, NEC1 interacts with the newly formed capsid through the vertexes and directs it to the inner nuclear membrane by associating with NEC2. Induces the budding of the capsid at the inner nuclear membrane as well as its envelopment into the perinuclear space. There, the NEC1/NEC2 complex promotes the fusion of the enveloped capsid with the outer nuclear membrane and the subsequent release of the viral capsid into the cytoplasm where it will reach the secondary budding sites in the host Golgi or trans-Golgi network. In Human herpesvirus 6B (HHV-6 variant B), this protein is Nuclear egress protein 1.